A 524-amino-acid chain; its full sequence is Bifunctional purine biosynthesis protein PurH (524 aa).

Residues 1 to 145 enclose the MGS-like domain; sequence MIQQALLSVS…KNHRDVTVIV (145 aa).

The protein belongs to the PurH family.

The enzyme catalyses (6R)-10-formyltetrahydrofolate + 5-amino-1-(5-phospho-beta-D-ribosyl)imidazole-4-carboxamide = 5-formamido-1-(5-phospho-D-ribosyl)imidazole-4-carboxamide + (6S)-5,6,7,8-tetrahydrofolate. It catalyses the reaction IMP + H2O = 5-formamido-1-(5-phospho-D-ribosyl)imidazole-4-carboxamide. Its pathway is purine metabolism; IMP biosynthesis via de novo pathway; 5-formamido-1-(5-phospho-D-ribosyl)imidazole-4-carboxamide from 5-amino-1-(5-phospho-D-ribosyl)imidazole-4-carboxamide (10-formyl THF route): step 1/1. It participates in purine metabolism; IMP biosynthesis via de novo pathway; IMP from 5-formamido-1-(5-phospho-D-ribosyl)imidazole-4-carboxamide: step 1/1. The polypeptide is Bifunctional purine biosynthesis protein PurH (Ralstonia nicotianae (strain ATCC BAA-1114 / GMI1000) (Ralstonia solanacearum)).